The following is a 437-amino-acid chain: Adenylosuccinate synthetase (437 aa).

GTP contacts are provided by residues 12 to 18 (GDEGKGK) and 40 to 42 (GHT). Asp13 serves as the catalytic Proton acceptor. Positions 13 and 40 each coordinate Mg(2+). IMP-binding positions include 13–16 (DEGK), 38–41 (NAGH), Thr128, Arg142, Gln223, Thr238, and Arg302. Catalysis depends on His41, which acts as the Proton donor. 298–304 (TTTGRRR) is a binding site for substrate. GTP is bound by residues Arg304, 330–332 (KLD), and 412–414 (SLG).

The protein belongs to the adenylosuccinate synthetase family. Homodimer. Mg(2+) serves as cofactor.

The protein resides in the cytoplasm. It catalyses the reaction IMP + L-aspartate + GTP = N(6)-(1,2-dicarboxyethyl)-AMP + GDP + phosphate + 2 H(+). Its pathway is purine metabolism; AMP biosynthesis via de novo pathway; AMP from IMP: step 1/2. Its function is as follows. Plays an important role in the de novo pathway of purine nucleotide biosynthesis. Catalyzes the first committed step in the biosynthesis of AMP from IMP. The polypeptide is Adenylosuccinate synthetase (Prochlorococcus marinus (strain NATL1A)).